We begin with the raw amino-acid sequence, 473 residues long: UDP-N-acetylmuramate--L-alanine ligase (473 aa).

An ATP-binding site is contributed by 112–118; it reads GTHGKTT.

It belongs to the MurCDEF family.

Its subcellular location is the cytoplasm. It carries out the reaction UDP-N-acetyl-alpha-D-muramate + L-alanine + ATP = UDP-N-acetyl-alpha-D-muramoyl-L-alanine + ADP + phosphate + H(+). Its pathway is cell wall biogenesis; peptidoglycan biosynthesis. Its function is as follows. Cell wall formation. This chain is UDP-N-acetylmuramate--L-alanine ligase, found in Nitrosomonas eutropha (strain DSM 101675 / C91 / Nm57).